Reading from the N-terminus, the 357-residue chain is Glutamate 5-kinase (357 aa).

Lys7 provides a ligand contact to ATP. Substrate contacts are provided by Ser43, Asp130, and Asn142. Residues 162–163 (TD) and 205–211 (TGGMTTK) each bind ATP. The region spanning 270–353 (EGELQLDAGA…PVVVHRDGLV (84 aa)) is the PUA domain.

The protein belongs to the glutamate 5-kinase family.

It localises to the cytoplasm. The enzyme catalyses L-glutamate + ATP = L-glutamyl 5-phosphate + ADP. The protein operates within amino-acid biosynthesis; L-proline biosynthesis; L-glutamate 5-semialdehyde from L-glutamate: step 1/2. Functionally, catalyzes the transfer of a phosphate group to glutamate to form L-glutamate 5-phosphate. The chain is Glutamate 5-kinase from Synechococcus sp. (strain CC9605).